Consider the following 154-residue polypeptide: MLKKIDLYTDGSCLGNPGPGGYGAVMVYGKHRKELAGGFRLTTNNRMELMAAIMGLRTLNEPCQVRLTTDSQYVRQGITQWIIGWKKKGWVTASRQPVKNVDLWQALDAEVARHQIEWLWVKGHSGHPENERCDELAREAASGKQLAEDTGYQP.

The 142-residue stretch at 1-142 folds into the RNase H type-1 domain; that stretch reads MLKKIDLYTD…CDELAREAAS (142 aa). Residues D10, E48, D70, and D134 each coordinate Mg(2+). A disordered region spans residues 133 to 154; it reads CDELAREAASGKQLAEDTGYQP.

The protein belongs to the RNase H family. Monomer. Mg(2+) serves as cofactor.

It localises to the cytoplasm. The enzyme catalyses Endonucleolytic cleavage to 5'-phosphomonoester.. Functionally, endonuclease that specifically degrades the RNA of RNA-DNA hybrids. The sequence is that of Ribonuclease H from Aeromonas hydrophila subsp. hydrophila (strain ATCC 7966 / DSM 30187 / BCRC 13018 / CCUG 14551 / JCM 1027 / KCTC 2358 / NCIMB 9240 / NCTC 8049).